Here is a 123-residue protein sequence, read N- to C-terminus: Ribosome-binding factor A (123 aa).

Belongs to the RbfA family. Monomer. Binds 30S ribosomal subunits, but not 50S ribosomal subunits or 70S ribosomes.

It localises to the cytoplasm. Functionally, one of several proteins that assist in the late maturation steps of the functional core of the 30S ribosomal subunit. Associates with free 30S ribosomal subunits (but not with 30S subunits that are part of 70S ribosomes or polysomes). Required for efficient processing of 16S rRNA. May interact with the 5'-terminal helix region of 16S rRNA. In Dechloromonas aromatica (strain RCB), this protein is Ribosome-binding factor A.